The sequence spans 188 residues: Elongation factor P (188 aa).

Belongs to the elongation factor P family.

The protein resides in the cytoplasm. Its pathway is protein biosynthesis; polypeptide chain elongation. Its function is as follows. Involved in peptide bond synthesis. Stimulates efficient translation and peptide-bond synthesis on native or reconstituted 70S ribosomes in vitro. Probably functions indirectly by altering the affinity of the ribosome for aminoacyl-tRNA, thus increasing their reactivity as acceptors for peptidyl transferase. The chain is Elongation factor P from Pseudomonas aeruginosa (strain LESB58).